The chain runs to 218 residues: OPA3-like protein (218 aa).

The stretch at 129–179 forms a coiled coil; sequence NEIMEKQFVLQKKKNELQSSTEEIDSTEKDFDELHKVILKVERELHTLRQN. The disordered stretch occupies residues 175-218; the sequence is TLRQNTPSQNEQAEATPSKEIPRETVSEKADHPPSSNTKSVSTG. A compositionally biased stretch (polar residues) spans 176–189; that stretch reads LRQNTPSQNEQAEA. The span at 194-206 shows a compositional bias: basic and acidic residues; it reads EIPRETVSEKADH. Residues 208–218 are compositionally biased toward polar residues; sequence PSSNTKSVSTG.

The protein belongs to the OPA3 family.

This Schizosaccharomyces pombe (strain 972 / ATCC 24843) (Fission yeast) protein is OPA3-like protein.